Here is a 237-residue protein sequence, read N- to C-terminus: Oligoribonuclease, mitochondrial (237 aa).

Residues 1–25 (MLGVSLGARLLRGVGGRRGQFGARG) constitute a mitochondrion transit peptide. Residues 43-207 (MVWVDLEMTG…DDISESIKEL (165 aa)) form the Exonuclease domain. Mg(2+) is bound by residues Asp47 and Glu49. At Ser92 the chain carries Phosphoserine. Tyr122 carries the post-translational modification Phosphotyrosine. Asp147 provides a ligand contact to Mg(2+). An N6-acetyllysine modification is found at Lys173. Residue His194 is part of the active site. Asp199 lines the Mg(2+) pocket.

This sequence belongs to the oligoribonuclease family. In terms of assembly, homodimer. Homotetramer. Mn(2+) serves as cofactor. Requires Mg(2+) as cofactor.

It localises to the mitochondrion intermembrane space. The protein localises to the mitochondrion matrix. Its subcellular location is the mitochondrion. It is found in the cytoplasm. The protein resides in the nucleus. Functionally, 3'-to-5'exoribonuclease that preferentially degrades DNA and RNA oligonucleotides composed of only two nucleotides. Binds and degrades longer oligonucleotides with a lower affinity. Plays dual roles in mitochondria, scavenging nanoRNAs (small RNA oligonucleotides of &lt;5 nucleotides) that are produced by the degradosome and clearing short RNAs that are generated by RNA processing. Essential for correct initiation of mitochondrial transcription, degrading mitochondrial RNA dinucleotides to prevent RNA-primed transcription at non-canonical sites in the mitochondrial genome. Essential for embryonic development. The sequence is that of Oligoribonuclease, mitochondrial (Rexo2) from Mus musculus (Mouse).